The chain runs to 185 residues: Ribosome-recycling factor (185 aa).

This sequence belongs to the RRF family.

It localises to the cytoplasm. Its function is as follows. Responsible for the release of ribosomes from messenger RNA at the termination of protein biosynthesis. May increase the efficiency of translation by recycling ribosomes from one round of translation to another. The sequence is that of Ribosome-recycling factor from Rhodospirillum centenum (strain ATCC 51521 / SW).